The primary structure comprises 318 residues: Ribose-phosphate pyrophosphokinase 2 (318 aa).

96–101 serves as a coordination point for ATP; the sequence is RQDKKD. The Mg(2+) site is built by aspartate 128, histidine 130, aspartate 139, and aspartate 143. Position 130 (histidine 130) interacts with ATP. A binding of phosphoribosylpyrophosphate region spans residues 212–227; that stretch reads KDRVAILVDDMADTCG.

This sequence belongs to the ribose-phosphate pyrophosphokinase family. In terms of assembly, homodimer. The active form is probably a hexamer composed of 3 homodimers. Mg(2+) is required as a cofactor.

It catalyses the reaction D-ribose 5-phosphate + ATP = 5-phospho-alpha-D-ribose 1-diphosphate + AMP + H(+). It participates in metabolic intermediate biosynthesis; 5-phospho-alpha-D-ribose 1-diphosphate biosynthesis; 5-phospho-alpha-D-ribose 1-diphosphate from D-ribose 5-phosphate (route I): step 1/1. Activated by magnesium and inorganic phosphate. Catalyzes the synthesis of phosphoribosylpyrophosphate (PRPP) that is essential for nucleotide synthesis. The sequence is that of Ribose-phosphate pyrophosphokinase 2 (Prps2) from Rattus norvegicus (Rat).